The primary structure comprises 300 residues: DNA repair protein RecO (300 aa).

Belongs to the RecO family.

Its function is as follows. Involved in DNA repair and RecF pathway recombination. The chain is DNA repair protein RecO from Nostoc punctiforme (strain ATCC 29133 / PCC 73102).